A 261-amino-acid polypeptide reads, in one-letter code: uncharacterized protein (261 aa).

6 helical membrane passes run 31–51 (TFLS…TGIV), 71–91 (TNVM…SWLL), 101–121 (LAYI…AGIA), 130–150 (LTSS…ASFI), 167–187 (LLLF…IPYV), and 213–233 (FAWL…YLAI).

It is found in the cell membrane. This is an uncharacterized protein from Mycoplasma genitalium (strain ATCC 33530 / DSM 19775 / NCTC 10195 / G37) (Mycoplasmoides genitalium).